A 288-amino-acid polypeptide reads, in one-letter code: Quinate/shikimate dehydrogenase (288 aa).

Residues Lys-71 and Asp-107 each contribute to the substrate site. NAD(+) contacts are provided by residues 132–135 (AGGA), 155–158 (NRRD), Lys-205, 232–235 (CVYN), and Gly-255.

This sequence belongs to the shikimate dehydrogenase family. In terms of assembly, homodimer.

The enzyme catalyses L-quinate + NAD(+) = 3-dehydroquinate + NADH + H(+). It carries out the reaction L-quinate + NADP(+) = 3-dehydroquinate + NADPH + H(+). It catalyses the reaction shikimate + NADP(+) = 3-dehydroshikimate + NADPH + H(+). The catalysed reaction is shikimate + NAD(+) = 3-dehydroshikimate + NADH + H(+). It participates in metabolic intermediate biosynthesis; chorismate biosynthesis; chorismate from D-erythrose 4-phosphate and phosphoenolpyruvate: step 4/7. In terms of biological role, the actual biological function of YdiB remains unclear, nor is it known whether 3-dehydroshikimate or quinate represents the natural substrate. Catalyzes the reversible NAD-dependent reduction of both 3-dehydroshikimate (DHSA) and 3-dehydroquinate to yield shikimate (SA) and quinate, respectively. It can use both NAD or NADP for catalysis, however it has higher catalytic efficiency with NAD. The polypeptide is Quinate/shikimate dehydrogenase (Escherichia coli O139:H28 (strain E24377A / ETEC)).